The sequence spans 571 residues: External alternative NAD(P)H-ubiquinone oxidoreductase B1, mitochondrial (571 aa).

Residues 1-35 (MTLLSSLGRASRSAPLASKLLLLGTLSGGSIVAYA) constitute a mitochondrion transit peptide. 51–81 (KVVVLGTGWAGISFLKDLDITSYDVQVVSPQ) contacts FAD. 215–251 (LHFVIVGGGPTGVEFAAELHDFIIEDITKIYPSVKEL) provides a ligand contact to NAD(+). Residues 372–407 (KILGDIANIFKAADADNSGTLTMEELEGVVDDIIVR) enclose the EF-hand domain. Residues Asp385, Asp387, Ser389, Thr391, and Glu396 each coordinate Ca(2+). Positions 562 to 571 (YIFGRDSSRI) match the Microbody targeting signal motif.

It belongs to the NADH dehydrogenase family. Requires FAD as cofactor. As to expression, expressed in seedlings, roots, cotyledons, leaves, stems, buds and flowers.

The protein resides in the mitochondrion inner membrane. It localises to the peroxisome. The catalysed reaction is a quinone + NADH + H(+) = a quinol + NAD(+). It carries out the reaction a ubiquinone + NADH + H(+) = a ubiquinol + NAD(+). With respect to regulation, activity is calcium-dependent with a more pronounced effect at higher pH. Its function is as follows. Alternative NADH-ubiquinone oxidoreductase which catalyzes the oxidation of mitochondrial NADH does not translocate protons across the inner mitochondrial membrane. Calcium-dependent NAD(P)H dehydrogenase. Binds calcium ions. This is External alternative NAD(P)H-ubiquinone oxidoreductase B1, mitochondrial (NDB1) from Arabidopsis thaliana (Mouse-ear cress).